A 1017-amino-acid chain; its full sequence is Disease resistance protein RML1B (1017 aa).

The TIR domain maps to 12 to 176 (YKFNVFASFH…KIARDVLDKL (165 aa)). Glutamate 87 is an active-site residue. One can recognise an NB-ARC domain in the interval 191 to 447 (EAHLREIKSL…HIAIFFNKED (257 aa)). LRR repeat units lie at residues 539 to 562 (ISRISEVSIRKKAFKRMPNLQFLK), 583 to 605 (PCLLRLLDWKAYPSKSLPPTFNP), 606 to 628 (EHLVELNMHSSQLEYLWQGTQPL), 629 to 652 (KNLKKMDLSQSKNLKQLPDLSNAT), 654 to 675 (LEYLYLMGCESLIEIPSSISHL), 676 to 698 (HKLEMLATVGCINLEVIPAHMNL), 699 to 724 (ESLQTVYLGGCSRLRNIPVMSTNIRY), 738 to 760 (CPGLKTLDVSGSRNFKGLLTHLP), 761 to 782 (TSLTTLNLCYTDIERIPDCFKS), and 784 to 809 (HQLKGVNLRGCRRLASLPELPRSLLT).

It catalyses the reaction NAD(+) + H2O = ADP-D-ribose + nicotinamide + H(+). Its function is as follows. TIR-NB-LRR receptor-like protein that confers resistance to the pathogen Leptosphaeria maculans (blackleg disease). The chain is Disease resistance protein RML1B from Arabidopsis thaliana (Mouse-ear cress).